The primary structure comprises 515 residues: MVQPYKHEPFTDFTVDANRQAFLAALEKVEAELGREYPLIIGGERVMTEDKITSVNPANKAEVIGRVAKANKELAERAMKTADEAFRTWSRTSPEARADILFRAAAIVRRRKHEFSAWLVKEAGKPWREADADTAEAIDFMEYYGRQMLKLKDGIPVESRPGETNRFFYIPLGVGVVISPWNFPFAIMAGTTVAALVTGNTVLLKPASATPVVAYKFAEVLEEAGLPAGVLNYIPGSGAEVGDYLVEHPRTRFISFTGSRDVGIRIYERAAKVQPGQIWLKRVIAEMGGKDAIVVDKEADLELAAQSIVASAFGFSGQKCSACSRAIIVEDVYDQVLNRVVELTKQLNVGDPAEQATFMGPVIDQGAYNKIMEYIEIGKQEGRLMTGGEGDDSKGFFIQPTVFADVDPNARIMQEEIFGPVVAFAKARDFDHALEIANNTQYGLTGAVISRNRANLEKARHEFHVGNLYFNRGCTGAIVGYQPFGGFNMSGTDSKAGGPDYLILHMQAKTVSEMF.

Residues Glu286 and Cys320 contribute to the active site.

Belongs to the aldehyde dehydrogenase family. RocA subfamily.

It carries out the reaction L-glutamate 5-semialdehyde + NAD(+) + H2O = L-glutamate + NADH + 2 H(+). The protein operates within amino-acid degradation; L-proline degradation into L-glutamate; L-glutamate from L-proline: step 2/2. The sequence is that of 1-pyrroline-5-carboxylate dehydrogenase from Geobacillus thermodenitrificans (strain NG80-2).